Consider the following 218-residue polypeptide: Cytidylate kinase (218 aa).

Residue 11-19 coordinates ATP; sequence GPSGVGKST.

Belongs to the cytidylate kinase family. Type 1 subfamily.

Its subcellular location is the cytoplasm. It carries out the reaction CMP + ATP = CDP + ADP. The enzyme catalyses dCMP + ATP = dCDP + ADP. This is Cytidylate kinase from Mycoplasmopsis synoviae (strain 53) (Mycoplasma synoviae).